Consider the following 437-residue polypeptide: Protein PhoH2 (437 aa).

Residues 7-134 (RTYVLDTSVL…LVSKDIPLRV (128 aa)) enclose the PINc domain.

In the N-terminal section; belongs to the PINc/VapC protein family. This sequence in the C-terminal section; belongs to the PhoH family. In terms of assembly, interacts with antitoxin PhoAT. It depends on Mg(2+) as a cofactor.

The enzyme catalyses n ATP + n H2O + wound RNA = n ADP + n phosphate + unwound RNA.. It catalyses the reaction ATP + H2O = ADP + phosphate + H(+). It carries out the reaction GTP + H2O = GDP + phosphate + H(+). Its function is as follows. Toxic component of a type II toxin-antitoxin (TA) system. The possible cognate antitoxin is PhoAT; the toxin gene can be expressed in the absence of the antitoxin gene in an endogenous mc(2)155 double deletion. Unwinds and/or cleaves 5'-tailed RNA in vitro that starts with 5'-AC, the reaction requires hydrolyzable ATP; double-stranded (ds)RNA and dsDNA are not unwound or cleaved. Has ATPase and GTPase activities. The sequence is that of Protein PhoH2 from Mycolicibacterium smegmatis (strain ATCC 700084 / mc(2)155) (Mycobacterium smegmatis).